The sequence spans 986 residues: MAKPRVYELAKVLNVDSKTVLEKLKDMGEFVKSASSTIEPPVARRLKAEFAKDNAKGDSKPASSAQKPAAKPVQQRRPAAPSAPASTSSSAPTPAAPARQASPASAHQQAPTPGAPTPRPQGGARPGMPTPGRHGQHDNRENGRDNREGRENGRQSRPNDRRNNDRRNNQGRPNNGQPGQHQNNRDNASAPRPHAQGGAGANGGNAASNAIPRPHAQGPRPGNNPFSRKQGMHTPTPGDIPRPHPMARPTADSGRGGRPGRPGQGQGQGRGFRGGRPGQGGQGGPRPGQWGHNRPGQGGGSQGAGQGGARGGFRGGQGGGNNFQGGGAPSNGPARGGGRGGRGGAAGAFGRQGGKSSKARKNRLAKRHEYEELKAPTIGGVRIPNGNGQTIRLRQGASLADLAEKINVNQAALVTVLFHLGQMATATQSLDEETFQILGGEIGWNIQLVSAEEEDKELLQQFDINLDEEELQDDEDLKPRPPVVTVMGHVDHGKTRLLDTIRKTNVIAREAGGITQRIGAYQVTVNLEGEPRKITFLDTPGHEAFTAMRARGAELTDVAILVVAADDGVMPQTVEAINHAQAAKVPIVVAVNKIDVPGANPEKVRGQLTEFGLVPEEYGGDTMFVDISAKQNLHVDKLLEAVLLTADAELDLRANPDMDARGATVEARLDKGRGAVATVLVQQGTLHVGDAIVAGTSYGRVRAMLDENGQPMEAAGPSTPVQVLGLTSVPTAGDLFLVASDDRAARQIAEKRQATERAAQLAKRRKVVSLEDFKKKFAESEIDMLNIVIKGDSSGSVEALEDSLMKIEVSDEVGIQVIHRGVGAITQNDVNLATVDKAVIIGFNVRPNRQVADLAEREGVEIKYYSVIYRAIEDIEASLKGMLKPEYEEVVTSHSEIREIFRSSKFGNIAGVMVQDGEVKRGTKCRILRNGVATVNDLEISSLRRFKDDVQSVKEGYEAGINLGTFNDIELGDIIETFEMQEVERK.

The segment covering 49-59 (EFAKDNAKGDS) has biased composition (basic and acidic residues). The segment at 49 to 370 (EFAKDNAKGD…KNRLAKRHEY (322 aa)) is disordered. The segment covering 60-112 (KPASSAQKPAAKPVQQRRPAAPSAPASTSSSAPTPAAPARQASPASAHQQAPT) has biased composition (low complexity). Over residues 135–168 (GQHDNRENGRDNREGRENGRQSRPNDRRNNDRRN) the composition is skewed to basic and acidic residues. The segment covering 170-182 (QGRPNNGQPGQHQ) has biased composition (low complexity). Composition is skewed to gly residues over residues 254 to 286 (GRGG…GGPR) and 296 to 353 (GQGG…GRQG). The segment covering 357–366 (SKARKNRLAK) has biased composition (basic residues). A tr-type G domain is found at 479 to 651 (PRPPVVTVMG…VLLTADAELD (173 aa)). Residues 488–495 (GHVDHGKT) form a G1 region. 488-495 (GHVDHGKT) lines the GTP pocket. The interval 513–517 (GITQR) is G2. Residues 538 to 541 (DTPG) are G3. GTP contacts are provided by residues 538-542 (DTPGH) and 592-595 (NKID). The tract at residues 592 to 595 (NKID) is G4. Residues 628 to 630 (SAK) form a G5 region.

This sequence belongs to the TRAFAC class translation factor GTPase superfamily. Classic translation factor GTPase family. IF-2 subfamily.

It localises to the cytoplasm. One of the essential components for the initiation of protein synthesis. Protects formylmethionyl-tRNA from spontaneous hydrolysis and promotes its binding to the 30S ribosomal subunits. Also involved in the hydrolysis of GTP during the formation of the 70S ribosomal complex. This Bifidobacterium longum subsp. infantis (strain ATCC 15697 / DSM 20088 / JCM 1222 / NCTC 11817 / S12) protein is Translation initiation factor IF-2.